The sequence spans 311 residues: Immune-associated nucleotide-binding protein 7 (311 aa).

One can recognise an AIG1-type G domain in the interval Lys14–Lys222. A G1 region spans residues Gly23 to Ser30. GTP is bound by residues Gly23 to Ala31 and Ser44. Positions Gly50–Lys54 are G2. Residues Asp72–Gly75 are G3. The G4 stretch occupies residues Thr142–Asp145. Positions Asp181 to Lys183 are G5. Asn182 provides a ligand contact to GTP. The stretch at Tyr218 to Ala295 forms a coiled coil.

The protein belongs to the TRAFAC class TrmE-Era-EngA-EngB-Septin-like GTPase superfamily. AIG1/Toc34/Toc159-like paraseptin GTPase family. IAN subfamily. In terms of tissue distribution, ubiquitous.

This is Immune-associated nucleotide-binding protein 7 from Arabidopsis thaliana (Mouse-ear cress).